The following is a 23-amino-acid chain: Cytochrome c3-1 (23 aa).

Residues 1-23 are disordered; it reads AAPKAPADGLKMDKTKQXVVFNH. Residue H23 coordinates heme.

In terms of processing, binds 4 heme groups per subunit.

It is found in the periplasm. In terms of biological role, participates in sulfate respiration coupled with phosphorylation by transferring electrons from the enzyme dehydrogenase to ferredoxin. The chain is Cytochrome c3-1 from Nitratidesulfovibrio vulgaris (Desulfovibrio vulgaris).